We begin with the raw amino-acid sequence, 326 residues long: dTDP-4-dehydro-6-deoxy-D-allose reductase (326 aa).

NAD(+) contacts are provided by residues 15 to 21 (GALGFIG) and 129 to 132 (MSSS). Y160 serves as the catalytic Proton donor/acceptor. NAD(+)-binding positions include K164 and 187 to 190 (PGNV).

It belongs to the NAD(P)-dependent epimerase/dehydratase family.

It carries out the reaction dTDP-6-deoxy-alpha-D-allose + NAD(+) = dTDP-4-dehydro-6-deoxy-alpha-D-allose + NADH + H(+). The catalysed reaction is dTDP-6-deoxy-alpha-D-allose + NADP(+) = dTDP-4-dehydro-6-deoxy-alpha-D-allose + NADPH + H(+). Functionally, catalyzes the stereospecific reduction of the C-4 keto group of dTDP-4-dehydro-6-deoxy-D-allose, leading to dTDP-6-deoxy-D-allose, an intermediate in the biosynthesis of the mycinose moiety of dihydrochalcomycin (GERI-155) antibiotic. Cannot directly reduce dTDP-4-dehydro-6-deoxyglucose, and thus acts after the epimerization step catalyzed by GerF. The sequence is that of dTDP-4-dehydro-6-deoxy-D-allose reductase (gerKI) from Streptomyces sp.